Reading from the N-terminus, the 135-residue chain is Putative pre-16S rRNA nuclease (135 aa).

The protein belongs to the YqgF nuclease family.

The protein localises to the cytoplasm. Its function is as follows. Could be a nuclease involved in processing of the 5'-end of pre-16S rRNA. This chain is Putative pre-16S rRNA nuclease, found in Clostridium acetobutylicum (strain ATCC 824 / DSM 792 / JCM 1419 / IAM 19013 / LMG 5710 / NBRC 13948 / NRRL B-527 / VKM B-1787 / 2291 / W).